A 349-amino-acid chain; its full sequence is MPVERMRMRPWLEEQINSNTIPGLKWLNKEKKIFQIPWMHAARHGWDVEKDAPLFRNWAIHTGKHQPGIDKPDPKTWKANFRCAMNSLPDIEEVKDRSIKKGNNAFRVYRMLPLSERPSKKGKKPKTEKEERVKHIKQEPVESSLGLSNGVSGFSPEYAVLTSAIKNEVDSTVNIIVVGQSHLDSNIEDQEIVTNPPDICQVVEVTTESDDQPVSMSELYPLQISPVSSYAESETTDSVASDEENAEGRPHWRKRSIEGKQYLSNMGTRNTYLLPSMATFVTSNKPDLQVTIKEDSCPMPYNSSWPPFTDLPLPAPVTPTPSSSRPDRETRASVIKKTSDITQARVKSC.

Positions 5-113 form a DNA-binding region, IRF tryptophan pentad repeat; it reads RMRMRPWLEE…NAFRVYRMLP (109 aa). An N6-acetyllysine mark is found at lysine 75 and lysine 78. Lysine 137 is covalently cross-linked (Glycyl lysine isopeptide (Lys-Gly) (interchain with G-Cter in SUMO); alternate). Residue lysine 137 forms a Glycyl lysine isopeptide (Lys-Gly) (interchain with G-Cter in SUMO2); alternate linkage. Residue lysine 166 forms a Glycyl lysine isopeptide (Lys-Gly) (interchain with G-Cter in SUMO) linkage. Residue serine 225 is modified to Phosphoserine. The segment covering 230-239 has biased composition (polar residues); the sequence is YAESETTDSV. A disordered region spans residues 230–253; it reads YAESETTDSVASDEENAEGRPHWR. Lysine 260 participates in a covalent cross-link: Glycyl lysine isopeptide (Lys-Gly) (interchain with G-Cter in SUMO2). Lysine 293 participates in a covalent cross-link: Glycyl lysine isopeptide (Lys-Gly) (interchain with G-Cter in SUMO). Residues 303 to 349 form a disordered region; the sequence is SSWPPFTDLPLPAPVTPTPSSSRPDRETRASVIKKTSDITQARVKSC.

The protein belongs to the IRF family. As to quaternary structure, interacts with BRD7, IRF2BP1 and IRF2BP2. Interacts with CREBBP in growing cells; the interaction acetylates IRF2 and regulates IRF2-dependent H4 promoter activity. Post-translationally, acetylated by CBP/ p300 during cell-growth. Acetylation on Lys-75 is required for stimulation of H4 promoter activity. In terms of processing, the major sites of sumoylation are Lys-137 and Lys-293. Sumoylation with SUMO1 increases its transcriptional repressor activity on IRF1 and diminishes its ability to activate ISRE and H4 promoter.

It is found in the nucleus. Specifically binds to the upstream regulatory region of type I IFN and IFN-inducible MHC class I genes (the interferon consensus sequence (ICS)) and represses those genes. Also acts as an activator for several genes including H4 and IL7. Constitutively binds to the ISRE promoter to activate IL7. Involved in cell cycle regulation through binding the site II (HiNF-M) promoter region of H4 and activating transcription during cell growth. Antagonizes IRF1 transcriptional activation. This chain is Interferon regulatory factor 2 (Irf2), found in Mus musculus (Mouse).